The following is a 420-amino-acid chain: Sulfate adenylyltransferase (420 aa).

Belongs to the sulfate adenylyltransferase family.

It carries out the reaction sulfate + ATP + H(+) = adenosine 5'-phosphosulfate + diphosphate. Its pathway is sulfur metabolism; hydrogen sulfide biosynthesis; sulfite from sulfate: step 1/3. In Desulforudis audaxviator (strain MP104C), this protein is Sulfate adenylyltransferase.